The following is a 386-amino-acid chain: 8-amino-7-oxononanoate synthase (386 aa).

The substrate site is built by Arg-22 and Arg-29. 109–110 (GY) provides a ligand contact to pyridoxal 5'-phosphate. His-134 contacts substrate. Residues Ser-182, 207–210 (DDAH), and 237–240 (TLSK) contribute to the pyridoxal 5'-phosphate site. Lys-240 is modified (N6-(pyridoxal phosphate)lysine). Position 349 (Thr-349) interacts with substrate.

Belongs to the class-II pyridoxal-phosphate-dependent aminotransferase family. BioF subfamily. In terms of assembly, homodimer. Pyridoxal 5'-phosphate serves as cofactor.

It carries out the reaction 6-carboxyhexanoyl-[ACP] + L-alanine + H(+) = (8S)-8-amino-7-oxononanoate + holo-[ACP] + CO2. It functions in the pathway cofactor biosynthesis; biotin biosynthesis. In terms of biological role, catalyzes the decarboxylative condensation of pimeloyl-[acyl-carrier protein] and L-alanine to produce 8-amino-7-oxononanoate (AON), [acyl-carrier protein], and carbon dioxide. The chain is 8-amino-7-oxononanoate synthase from Beijerinckia indica subsp. indica (strain ATCC 9039 / DSM 1715 / NCIMB 8712).